The primary structure comprises 486 residues: MPEDSSSLDYAMEKASGPHFSGLRFDGLLSSSPPNSSVVSSLRSAVSSSSPSSSDPEAPKQPFIIGVSGGTASGKTTVCDMIIQQLHDHRVVLVNQDSFYRGLTSEELQRVQEYNFDHPDAFDTEQLLHCAETLKSGQPYQVPIYDFKTHQRRSDTFRQVNASDVIILEGILVFHDSRVRNLMNMKIFVDTDADVRLARRIRRDTVERGRDVNSVLEQYAKFVKPAFDDFVLPSKKYADVIIPRGGDNHVAVDLITQHIHTKLGQHDLCKIYPNVYVIQSTFQIRGMHTLIREKDISKHDFVFYSDRLIRLVVEHGLGHLPFTEKQVVTPTGAVYTGVDFCKKLCGVSIIRSGESMENALRACCKGIKIGKILIHRDGDNGKQLIYEKLPHDISERHVLLLDPVLATGNSANQAIELLIQKGVPEAHIIFLNLISAPEGIHCVCKRFPALKIVTSEIDQCLNQEFRVIPGLGEFGDRYFGTDEEDQ.

The transit peptide at 1 to 47 directs the protein to the chloroplast; the sequence is MPEDSSSLDYAMEKASGPHFSGLRFDGLLSSSPPNSSVVSSLRSAVS. The span at 31–54 shows a compositional bias: low complexity; sequence SSPPNSSVVSSLRSAVSSSSPSSS. The segment at 31–67 is disordered; sequence SSPPNSSVVSSLRSAVSSSSPSSSDPEAPKQPFIIGV. The uridine kinase stretch occupies residues 59-264; sequence PKQPFIIGVS…ITQHIHTKLG (206 aa). Residues 274–486 form a uracil phosphoribosyltransferase region; the sequence is NVYVIQSTFQ…RYFGTDEEDQ (213 aa). GTP contacts are provided by residues Lys-298, Arg-307, and 341–344; that span reads CKKL. Residues Arg-351 and Arg-376 each contribute to the 5-phospho-alpha-D-ribose 1-diphosphate site. Arg-396 provides a ligand contact to GTP. Residues Asp-402, 407–410, and Glu-473 contribute to the 5-phospho-alpha-D-ribose 1-diphosphate site; that span reads TGNS. Residue 472-474 participates in uracil binding; that stretch reads GEF.

It in the N-terminal section; belongs to the uridine kinase family. In the C-terminal section; belongs to the UPRTase family. In terms of tissue distribution, expressed in roots, leaves and stems.

It is found in the plastid. Its subcellular location is the chloroplast. The protein resides in the cytoplasm. The enzyme catalyses cytidine + ATP = CMP + ADP + H(+). It carries out the reaction uridine + ATP = UMP + ADP + H(+). It participates in pyrimidine metabolism; CTP biosynthesis via salvage pathway; CTP from cytidine: step 1/3. Its pathway is pyrimidine metabolism; UMP biosynthesis via salvage pathway; UMP from uridine: step 1/1. Functionally, involved in the pyrimidine salvage pathway. Phosphorylates uridine to uridine monophosphate (UMP). Phosphorylates cytidine to cytidine monophosphate (CMP). Does not possess uracil phosphoribosyltransferase (UPRTase) activity that catalyzes the conversion of uracil and 5-phospho-alpha-D-ribose 1-diphosphate (PRPP) to UMP and diphosphate. The chain is Uridine/cytidine kinase UKL1, chloroplastic from Arabidopsis thaliana (Mouse-ear cress).